A 209-amino-acid chain; its full sequence is Uracil phosphoribosyltransferase (209 aa).

5-phospho-alpha-D-ribose 1-diphosphate-binding positions include Arg-79, Arg-104, and 131 to 139 (DPMLATGGS). Residues Val-194 and 199-201 (GDA) each bind uracil. Asp-200 contacts 5-phospho-alpha-D-ribose 1-diphosphate.

This sequence belongs to the UPRTase family. The cofactor is Mg(2+).

It carries out the reaction UMP + diphosphate = 5-phospho-alpha-D-ribose 1-diphosphate + uracil. It functions in the pathway pyrimidine metabolism; UMP biosynthesis via salvage pathway; UMP from uracil: step 1/1. Its activity is regulated as follows. Allosterically activated by GTP. In terms of biological role, catalyzes the conversion of uracil and 5-phospho-alpha-D-ribose 1-diphosphate (PRPP) to UMP and diphosphate. The sequence is that of Uracil phosphoribosyltransferase from Bacillus cytotoxicus (strain DSM 22905 / CIP 110041 / 391-98 / NVH 391-98).